A 544-amino-acid chain; its full sequence is Formate--tetrahydrofolate ligase (544 aa).

Thr-63–Ser-70 contributes to the ATP binding site.

This sequence belongs to the formate--tetrahydrofolate ligase family.

The enzyme catalyses (6S)-5,6,7,8-tetrahydrofolate + formate + ATP = (6R)-10-formyltetrahydrofolate + ADP + phosphate. It functions in the pathway one-carbon metabolism; tetrahydrofolate interconversion. In Fusobacterium nucleatum subsp. nucleatum (strain ATCC 25586 / DSM 15643 / BCRC 10681 / CIP 101130 / JCM 8532 / KCTC 2640 / LMG 13131 / VPI 4355), this protein is Formate--tetrahydrofolate ligase.